Consider the following 1024-residue polypeptide: Beta-galactosidase (1024 aa).

Residues Asn-103 and Asp-202 each contribute to the substrate site. Asp-202 serves as a coordination point for Na(+). Residues Glu-417, His-419, and Glu-462 each coordinate Mg(2+). Residues Glu-462 and 538–541 (EYAH) each bind substrate. Glu-462 acts as the Proton donor in catalysis. Glu-538 functions as the Nucleophile in the catalytic mechanism. Asn-598 contributes to the Mg(2+) binding site. Na(+) is bound by residues Phe-602 and Asn-605. Asn-605 and Trp-1000 together coordinate substrate.

The protein belongs to the glycosyl hydrolase 2 family. Homotetramer. Requires Mg(2+) as cofactor. Na(+) is required as a cofactor.

It carries out the reaction Hydrolysis of terminal non-reducing beta-D-galactose residues in beta-D-galactosides.. The polypeptide is Beta-galactosidase (Shigella dysenteriae serotype 1 (strain Sd197)).